A 403-amino-acid polypeptide reads, in one-letter code: RILP-like protein 1 (403 aa).

Ser7 is modified (phosphoserine). Residues 10–97 (AAESALEKNV…RLERMDRIEK (88 aa)) form the RH1 domain. Cys47 carries the S-nitrosocysteine modification. The stretch at 76–258 (ELDELRLELD…KLRERLQGEH (183 aa)) forms a coiled coil. 3 disordered regions span residues 254–275 (LQGE…GEES), 327–352 (EMEE…PESG), and 384–403 (ANTH…LQHL). Ser259 carries the post-translational modification Phosphoserine. Acidic residues predominate over residues 262–275 (GEEEPETEPVGEES). Residues 291 to 356 (RPRFTLQELR…PQPESGIKRL (66 aa)) enclose the RH2 domain. Residues 394-403 (EQGQEALQHL) show a composition bias toward polar residues.

This sequence belongs to the RILPL family. As to quaternary structure, interacts (when S-nitrosylated) with GAPDH. Interacts with RAB8A; interaction is dependent on the phosphorylation of 'Thr-72' of RAB8A. Interacts with RAB10 and RAB12; the interaction is dependent on the phosphorylation of 'Thr-73' of RAB10, and 'Ser-105' of RAB12. S-nitrosylation is required for the interaction with GAPDH. As to expression, widely expressed. Expressed at lower level in liver and kidney.

It is found in the cytoplasm. Its subcellular location is the cytosol. The protein resides in the cytoskeleton. The protein localises to the microtubule organizing center. It localises to the centrosome. It is found in the centriole. Its subcellular location is the cilium basal body. Plays a role in the regulation of cell shape and polarity. Plays a role in cellular protein transport, including protein transport away from primary cilia. Neuroprotective protein, which acts by sequestring GAPDH in the cytosol and prevent the apoptotic function of GAPDH in the nucleus. Competes with SIAH1 for binding GAPDH. Does not regulate lysosomal morphology and distribution. Binds to RAB10 following LRRK2-mediated RAB10 phosphorylation which leads to inhibition of ciliogenesis. This chain is RILP-like protein 1 (RILPL1), found in Homo sapiens (Human).